A 79-amino-acid polypeptide reads, in one-letter code: Putative Fis-like DNA-binding protein (79 aa).

Residues 55-74 (QSKASVMLGLNRNTLRKKLI) constitute a DNA-binding region (H-T-H motif).

It belongs to the transcriptional regulatory Fis family.

This chain is Putative Fis-like DNA-binding protein, found in Neisseria meningitidis serogroup A / serotype 4A (strain DSM 15465 / Z2491).